Consider the following 178-residue polypeptide: Caveolin-1 (178 aa).

At serine 2 the chain carries N-acetylserine. Phosphoserine is present on serine 2. Positions 2 to 94 are required for homooligomerization; sequence SGGKYVDSEG…WKASFTTFTV (93 aa). Over 2 to 104 the chain is Cytoplasmic; sequence SGGKYVDSEG…TKYWFYRLLS (103 aa). Lysine 5 bears the N6-acetyllysine; alternate mark. Residue lysine 5 forms a Glycyl lysine isopeptide (Lys-Gly) (interchain with G-Cter in ubiquitin); alternate linkage. A Phosphotyrosine modification is found at tyrosine 6. At serine 9 the chain carries Phosphoserine. At tyrosine 14 the chain carries Phosphotyrosine; by ABL1. Tyrosine 25 is modified (phosphotyrosine). Glycyl lysine isopeptide (Lys-Gly) (interchain with G-Cter in ubiquitin) cross-links involve residues lysine 26, lysine 39, lysine 47, and lysine 57. The interaction with CAVIN3 stretch occupies residues 82-94; it reads DGIWKASFTTFTV. Residues 105-125 constitute an intramembrane region (helical); that stretch reads ALFGIPMALIWGIYFAILSFL. At 126 to 178 the chain is on the cytoplasmic side; that stretch reads HIWAVVPCIKSFLIEIQCISRVYSIYVHTFCDPLFEAIGKIFSSIRINMQKEI. Residues 131-142 are interacts with SPRY1, SPRY2, SPRY3 and SPRY4; sequence VPCIKSFLIEIQ. Residues cysteine 133, cysteine 143, and cysteine 156 are each lipidated (S-palmitoyl cysteine). Residues 149–160 form an interacts with SPRY1, SPRY2, and SPRY4 region; sequence SIYVHTFCDPLF. The interval 167–178 is interacts with SPRY1, SPRY2, SPRY3 and SPRY4; it reads FSSIRINMQKEI.

It belongs to the caveolin family. In terms of assembly, homooligomer. Interacts with GLIPR2. Interacts with NOSTRIN. Interacts with SNAP25 and STX1A. Interacts (via the N-terminus) with DPP4; the interaction is direct. Interacts with CTNNB1, CDH1 and JUP. Interacts with PACSIN2; this interaction induces membrane tubulation. Interacts with SLC7A9. Interacts with BMX and BTK. Interacts with TGFBR1. Interacts with CAVIN3 (via leucine-zipper domain) in a cholesterol-sensitive manner. Interacts with CAVIN1. Interacts with EHD2 in a cholesterol-dependent manner. Forms a ternary complex with UBXN6 and VCP; mediates CAV1 targeting to lysosomes for degradation. Interacts with ABCG1; this interaction regulates ABCG1-mediated cholesterol efflux. Interacts with NEU3; this interaction enhances NEU3 sialidase activity within caveola. Interacts (via C-terminus) with SPRY1, SPRY2 (via C-terminus), SPRY3, and SPRY4. Interacts with IGFBP5; this interaction allows trafficking of IGFBP5 from the plasma membrane to the nucleus. Phosphorylated at Tyr-14 by ABL1 in response to oxidative stress. Post-translationally, ubiquitinated. Undergo monoubiquitination and multi- and/or polyubiquitination. Monoubiquitination of N-terminal lysines promotes integration in a ternary complex with UBXN6 and VCP which promotes oligomeric CAV1 targeting to lysosomes for degradation. Ubiquitinated by ZNRF1; leading to degradation and modulation of the TLR4-mediated immune response.

Its subcellular location is the golgi apparatus membrane. It localises to the cell membrane. The protein localises to the membrane. It is found in the caveola. The protein resides in the membrane raft. Functionally, may act as a scaffolding protein within caveolar membranes. Forms a stable heterooligomeric complex with CAV2 that targets to lipid rafts and drives caveolae formation. Mediates the recruitment of CAVIN proteins (CAVIN1/2/3/4) to the caveolae. Interacts directly with G-protein alpha subunits and can functionally regulate their activity. Involved in the costimulatory signal essential for T-cell receptor (TCR)-mediated T-cell activation. Its binding to DPP4 induces T-cell proliferation and NF-kappa-B activation in a T-cell receptor/CD3-dependent manner. Recruits CTNNB1 to caveolar membranes and may regulate CTNNB1-mediated signaling through the Wnt pathway. Negatively regulates TGFB1-mediated activation of SMAD2/3 by mediating the internalization of TGFBR1 from membrane rafts leading to its subsequent degradation. Binds 20(S)-hydroxycholesterol (20(S)-OHC). This is Caveolin-1 (CAV1) from Loxodonta africana (African elephant).